The sequence spans 146 residues: Mitochondrial import receptor subunit TOM20 homolog B (146 aa).

The Mitochondrial intermembrane segment spans residues 1-5; that stretch reads MMGGS. A helical transmembrane segment spans residues 6-25; it reads SSRIAAGLGAALFVGYCIYF. Over 26–146 the chain is Cytoplasmic; sequence DRKRRSDPNY…AQSISDDDIE (121 aa). Positions 37-47 are enriched in basic residues; the sequence is NKLRERRKKQK. Positions 37 to 56 are disordered; the sequence is NKLRERRKKQKAAQEKAGLS. Ser-141 carries the post-translational modification Phosphoserine.

Belongs to the Tom20 family. As to quaternary structure, forms part of the preprotein translocase complex of the outer mitochondrial membrane (TOM complex). Interacts with tom22.

The protein resides in the mitochondrion outer membrane. Its function is as follows. Central component of the receptor complex responsible for the recognition and translocation of cytosolically synthesized mitochondrial preproteins. Together with tom22 functions as the transit peptide receptor at the surface of the mitochondrion outer membrane and facilitates the movement of preproteins into the tom40 translocation pore. The protein is Mitochondrial import receptor subunit TOM20 homolog B (tomm20b) of Danio rerio (Zebrafish).